Here is a 156-residue protein sequence, read N- to C-terminus: Myosin regulatory light chain, striated adductor muscle (156 aa).

A1 carries the post-translational modification Blocked amino end (Ala). EF-hand domains follow at residues 15–50 (KQIQ…LGRT) and 84–119 (DSEE…MGDN). D28, D30, D32, and D39 together coordinate Ca(2+).

In molluscan muscle, calcium regulation is associated with myosin rather than with actin. Muscle myosin contains two types of light chains: the catalytic light chain, essential for ATPase activity, and the regulatory light chain, a calcium-binding protein responsible for Ca(2+) dependent binding and Ca(2+) dependent Mg-ATPase activity. This is Myosin regulatory light chain, striated adductor muscle from Chlamys nipponensis akazara (Akazara scallop).